Consider the following 493-residue polypeptide: MSAKLTLESIAKTFAETSIFAILFLIIVILNLGLLVFLAYQYRVYKKKQRANLTKQTYNNDYGQIVNLKQQNGAKIKELANLKDQLSELGQKFNTTLSEIINKPLVNVIDEYLDEQFKQAANFREAELNAVLDSNDQKTVFHKRLFNKFHFGVDKLANINVKNPLNLCWVDSASFTVIESDFRKLNGVGGINKKLLIEKLRIEDIIFTNIDKKYYEVQILSDSPVKVQKTVLTIRNILINDYVDNEKIESYAREANGYFNDHCKLIGKQVLERLNIFEISPKLHKFFGLLAFRYSFGQNVLSHCLETGFLTAYLALLVNFKPDVALKCGLYHDIGKADDENGKKNHTVTGAKIGDEFYFENDVKYTIANHHNKNVDNVYCRLTQIGDKLSAGRLGARSDSSVLFSQLKQELKQIVEETLAQFKTTILLGQSGRRLVIWLETNQHNNIIDNQQLTDLATTIKSKIVQNNITNRFPIKVVLRYNFEHSFDTKDKN.

A helical membrane pass occupies residues 19-39 (IFAILFLIIVILNLGLLVFLA). The region spanning 172 to 241 (SASFTVIESD…LTIRNILIND (70 aa)) is the KH domain. An HD domain is found at 300–392 (VLSHCLETGF…TQIGDKLSAG (93 aa)).

This sequence belongs to the RNase Y family.

The protein localises to the cell membrane. In terms of biological role, endoribonuclease that initiates mRNA decay. In Mycoplasma pneumoniae (strain ATCC 29342 / M129 / Subtype 1) (Mycoplasmoides pneumoniae), this protein is Ribonuclease Y.